The primary structure comprises 93 residues: Integration host factor subunit beta (93 aa).

It belongs to the bacterial histone-like protein family. As to quaternary structure, heterodimer of an alpha and a beta chain.

In terms of biological role, this protein is one of the two subunits of integration host factor, a specific DNA-binding protein that functions in genetic recombination as well as in transcriptional and translational control. The sequence is that of Integration host factor subunit beta from Cereibacter sphaeroides (strain KD131 / KCTC 12085) (Rhodobacter sphaeroides).